The chain runs to 383 residues: Putative dehydratase subunit YjiM (383 aa).

The protein belongs to the FldB/FldC dehydratase alpha/beta subunit family.

The protein is Putative dehydratase subunit YjiM (yjiM) of Escherichia coli (strain K12).